Reading from the N-terminus, the 204-residue chain is Ras-related protein Rab-1D (204 aa).

GTP-binding positions include 17–25 (GDSGVGKSC), 35–42 (WTDTHIST), 65–69 (DTAGQ), 123–126 (NKTD), and 153–155 (SAK). The Effector region motif lies at 39–47 (HISTIGVDF). Residues 182-191 (PKPDEVDIKS) show a composition bias toward basic and acidic residues. Positions 182–204 (PKPDEVDIKSKNKTKSGGKKSFC) are disordered. Basic residues predominate over residues 192–204 (KNKTKSGGKKSFC). The S-geranylgeranyl cysteine moiety is linked to residue Cys204.

The protein belongs to the small GTPase superfamily. Rab family.

It localises to the cell membrane. The sequence is that of Ras-related protein Rab-1D (rab1D) from Dictyostelium discoideum (Social amoeba).